The chain runs to 801 residues: N,N'-diacetylchitobiose phosphorylase (801 aa).

N-acetyl-alpha-D-glucosamine 1-phosphate is bound by residues R333, R343, R349, D350, W490, and D492. D492 functions as the Proton donor in the catalytic mechanism. The N-acetyl-D-glucosamine site is built by D492, K636, and E637. N-acetyl-alpha-D-glucosamine 1-phosphate contacts are provided by E637, H644, Q690, T709, and G710.

This sequence belongs to the glycosyl hydrolase 94 family. Homodimer.

The catalysed reaction is N,N'-diacetylchitobiose + phosphate = N-acetyl-alpha-D-glucosamine 1-phosphate + N-acetyl-D-glucosamine. In terms of biological role, catalyzes the reversible phosphorolysis of chitobiose (N,N'-diacetylchitobiose or (GlcNAc)(2)) into N-acetyl-alpha-D-glucosamine 1-phosphate (GlcNAc-1-P) and N-acetyl-D-glucosamine (GlcNAc) with inversion of the anomeric configuration. In the synthetic reaction, is also active on glucose-1-phosphate with 10% activity as compared with that on GlcNAc-1-P. GlcNAc is the best acceptor substrate, but the enzyme can use aryl-beta-glycosides of GlcNAc as the acceptor substrate with 10-20% activities of GlcNAc. Shows no phosphorolytic activity on cellobiose. The sequence is that of N,N'-diacetylchitobiose phosphorylase from Vibrio proteolyticus (Aeromonas proteolytica).